Consider the following 307-residue polypeptide: Pantothenate kinase (307 aa).

90–97 (GSVAVGKS) provides a ligand contact to ATP.

The protein belongs to the prokaryotic pantothenate kinase family.

It localises to the cytoplasm. It catalyses the reaction (R)-pantothenate + ATP = (R)-4'-phosphopantothenate + ADP + H(+). The protein operates within cofactor biosynthesis; coenzyme A biosynthesis; CoA from (R)-pantothenate: step 1/5. In Levilactobacillus brevis (strain ATCC 367 / BCRC 12310 / CIP 105137 / JCM 1170 / LMG 11437 / NCIMB 947 / NCTC 947) (Lactobacillus brevis), this protein is Pantothenate kinase.